The following is a 723-amino-acid chain: MIYQAKTLQVKQLANGIAELSFCAPASVNKLDLHTLESLDKALDALAADSSVKGLLLSSDKEAFIVGADITEFLGLFAKPEAELDEWLQFANRIFNKLEDLPFPTLSALKGHTLGGGCECVLATDFRIGDATTSIGLPETKLGIMPGFGGTVRLPRLIGADSAMEIITQGKACRAEEALKVGLLDAIVDSDKLIDSAITTLTQAIEEKLDWQKRRQQKTSALTLSKLEAMMSFTMAKGMVAQVAGKHYPAPMTSVVTIEEAARLPRDAALDIERKHFIKLAKSTEAQALVGIFLNDQYIKGLAKQSAKAASQDTQHAAVLGAGIMGGGIAYQSALKGVPVLMKDIAPHSLELGMTEAAKLLNKQLERGKIDGFKMAGILASITPSLHYAGIDQADVIVEAVVENPKVKAAVLSEVEGLVDTETILTSNTSTIPINLLAKSLKRPQNFCGMHFFNPVHRMPLVEIIRGEHTSEDTINRVVAYAAKMGKSPIVVNDCPGFFVNRVLFPYFAGFSLLMRDGANFTEIDKVMERQFGWPMGPAYLLDVVGIDTAHHAQAVMAEGFPTRMAKSGREAIDALYEAKKFGQKNGSGFYQYTVDKKGKPKKAFSDDVLAILAPVCGAPQSFDPQTLIERTMIPMINEVVLCLEEGIIASAQEADMALVYGLGFPPFRGGVFRYLDTIGIANYVAMAEKYADLGALYQVPQLLKNMAQQGTSFYSAQQVSAL.

Residues 1 to 189 are enoyl-CoA hydratase/isomerase; the sequence is MIYQAKTLQV…KVGLLDAIVD (189 aa). Asp-296 provides a ligand contact to substrate. Residues 311-723 form a 3-hydroxyacyl-CoA dehydrogenase region; the sequence is SQDTQHAAVL…FYSAQQVSAL (413 aa). NAD(+) is bound by residues Met-325, Asp-344, 401 to 403, Lys-408, and Ser-430; that span reads VVE. Catalysis depends on His-451, which acts as the For 3-hydroxyacyl-CoA dehydrogenase activity. Asn-454 is a binding site for NAD(+). Residues Asn-501 and Tyr-661 each coordinate substrate.

The protein in the N-terminal section; belongs to the enoyl-CoA hydratase/isomerase family. This sequence in the C-terminal section; belongs to the 3-hydroxyacyl-CoA dehydrogenase family. Heterotetramer of two alpha chains (FadB) and two beta chains (FadA).

It catalyses the reaction a (3S)-3-hydroxyacyl-CoA + NAD(+) = a 3-oxoacyl-CoA + NADH + H(+). It carries out the reaction a (3S)-3-hydroxyacyl-CoA = a (2E)-enoyl-CoA + H2O. The enzyme catalyses a 4-saturated-(3S)-3-hydroxyacyl-CoA = a (3E)-enoyl-CoA + H2O. The catalysed reaction is (3S)-3-hydroxybutanoyl-CoA = (3R)-3-hydroxybutanoyl-CoA. It catalyses the reaction a (3Z)-enoyl-CoA = a 4-saturated (2E)-enoyl-CoA. It carries out the reaction a (3E)-enoyl-CoA = a 4-saturated (2E)-enoyl-CoA. Its pathway is lipid metabolism; fatty acid beta-oxidation. In terms of biological role, involved in the aerobic and anaerobic degradation of long-chain fatty acids via beta-oxidation cycle. Catalyzes the formation of 3-oxoacyl-CoA from enoyl-CoA via L-3-hydroxyacyl-CoA. It can also use D-3-hydroxyacyl-CoA and cis-3-enoyl-CoA as substrate. The chain is Fatty acid oxidation complex subunit alpha from Vibrio cholerae serotype O1 (strain ATCC 39315 / El Tor Inaba N16961).